A 160-amino-acid polypeptide reads, in one-letter code: uncharacterized protein (160 aa).

The N-terminal stretch at Met1 to Gln25 is a signal peptide.

This is an uncharacterized protein from Invertebrate iridescent virus 6 (IIV-6).